A 418-amino-acid polypeptide reads, in one-letter code: MLKKDMNIADYDPQLFAAIEDETRRQEEHIELIASENYTSPRVLEAQGTQLTNKYAEGYPGKRYYGGCEHVDIVEELAISRAKELFGATYANVQPHSGSQANAAVFMALLQGGDTVLGMSLAHGGHLTHGSHVSFSGKLYNAVQYGIDETTGKIDYAEVERLAVEHKPKMIIAGFSAYSGIVDWGKFREIADKVGAYLFVDMAHVAGLVAAGIYPSPMPHAHVVTTTTHKTLAGPRGGLILSAINDEDIYKKLNSAVFPGGQGGPLMHVIAAKAVAFKEALDPEFTTYQEQVVVNAKAMARTFIERGYDVVSGGTDNHLFLLDLISKDITGKDADAALGNANITVNKNSVPNDPRSPFVTSGLRIGSPAITRRGFGEEESVQLTHWMCDILDDISDLAVSERVKAQVLELCARFPVYG.

Residues Leu121 and 125–127 (GHL) each bind (6S)-5,6,7,8-tetrahydrofolate. Position 230 is an N6-(pyridoxal phosphate)lysine (Lys230). A (6S)-5,6,7,8-tetrahydrofolate-binding site is contributed by 356-358 (SPF).

This sequence belongs to the SHMT family. As to quaternary structure, homodimer. Pyridoxal 5'-phosphate is required as a cofactor.

It is found in the cytoplasm. The catalysed reaction is (6R)-5,10-methylene-5,6,7,8-tetrahydrofolate + glycine + H2O = (6S)-5,6,7,8-tetrahydrofolate + L-serine. It functions in the pathway one-carbon metabolism; tetrahydrofolate interconversion. The protein operates within amino-acid biosynthesis; glycine biosynthesis; glycine from L-serine: step 1/1. Its function is as follows. Catalyzes the reversible interconversion of serine and glycine with tetrahydrofolate (THF) serving as the one-carbon carrier. This reaction serves as the major source of one-carbon groups required for the biosynthesis of purines, thymidylate, methionine, and other important biomolecules. Also exhibits THF-independent aldolase activity toward beta-hydroxyamino acids, producing glycine and aldehydes, via a retro-aldol mechanism. The polypeptide is Serine hydroxymethyltransferase (Shewanella halifaxensis (strain HAW-EB4)).